The primary structure comprises 476 residues: Proline--tRNA ligase 2 (476 aa).

The protein belongs to the class-II aminoacyl-tRNA synthetase family. ProS type 3 subfamily. In terms of assembly, homodimer.

It is found in the cytoplasm. It carries out the reaction tRNA(Pro) + L-proline + ATP = L-prolyl-tRNA(Pro) + AMP + diphosphate. Its function is as follows. Catalyzes the attachment of proline to tRNA(Pro) in a two-step reaction: proline is first activated by ATP to form Pro-AMP and then transferred to the acceptor end of tRNA(Pro). This Bacillus thuringiensis subsp. konkukian (strain 97-27) protein is Proline--tRNA ligase 2.